A 34-amino-acid polypeptide reads, in one-letter code: Kappa-theraphotoxin-Scg1a (34 aa).

3 disulfides stabilise this stretch: cysteine 2–cysteine 16, cysteine 9–cysteine 21, and cysteine 15–cysteine 28. The tract at residues 4–6 (YLF) is involved in active face.

This sequence belongs to the neurotoxin 10 (Hwtx-1) family. 09 (HaTx) subfamily. Expressed by the venom gland.

It is found in the secreted. Reversibly inhibits potassium currents in oocytes expressing Kv2.1/KCNB1 channels (Kd=2.7 uM). Acts by shifting activation of the channel to more depolarized voltages. The toxin may bind to the S3b-S4 helices of the voltage sensor paddle. One, two, three or four toxin molecules may bind the Kv2.1/KCNB1 channel. It shows low to moderate affinity for lipid bilayers. It partitions into the bilayer membrane, where it stabilizes at the water/membrane interface. This is Kappa-theraphotoxin-Scg1a from Stromatopelma calceatum griseipes (Feather leg baboon tarantula).